Reading from the N-terminus, the 786-residue chain is MVSSGMYKMDNGKPCLNNCFPAKSLLRLPEEGRGHWIVVRKGSMKKGAAKASTEGQESQKKVSFDTGLKKISRRDSQADVLGHILDRSFLLKHHSARKPSDLCTINVSGMKFSKAKEKDFKHFTSVIYINASENLLPLDVFHTFPVLKELELAFNGIKMVYVKYGDFKTLEFLDLSFNSLTEEAICDLGILPHLRVLLLTGNGLTSLPPNMAVKEQEASMTSLTSKKYILRFPALETLMLDDNKLSNPSCFASLAGLRRLKKLSLDQNKIVRIPYLQQIQLRDGSGDWVTEGPNPQKELQPQMWIFETPDEQPNYTVLPMKKDVDRTEVVFSSYPGFSTSETAKVCSLPPMFEILPVKSLKARNQTLAPPFPELRYLSLAYNKIAKEDAVLPAALFPSLCELVFHNNPLVAHTRGIPPLLKSFLQDRLGIRLVRKKLVKPKHHMLMPRKESRKVKTYIPKVPKHSLVPHHLNMITDSPPSSLMPEPEHSTEDTSHEALFANEGPEGPSLTHRAFVPMPPICSDSTVHSEAVSHQSHTAGLVSSEHPSDDDAKSTESIFLTQVNELPSSTAHRENLEAVNDQRRPSTAPRETKRTRRKQTATSLHNKYDGYEELLTVKPDPAFLEPKGIQKNAQALHRMLKQPLICRSSKPRLDTFQKPYVPKEKRAGRIPILPPRKTRAQLLDDILIRMRDPRNVTEAPLGTVLQRRAQQRLVNQKQYREAKRLLKEFRARYRQLVRSSLRTVFAASPPPRPPTRRALSAGQPKLGRFLEFMDEFCQEPTASDSKE.

5 LRR repeats span residues 146–158 (VLKELELAFNGIK), 169–192 (TLEFLDLSFNSLTEEAICDLGILP), 193–214 (HLRVLLLTGNGLTSLPPNMAVK), 234–255 (ALETLMLDDNKLSNPSCFASLA), and 259–280 (RLKKLSLDQNKIVRIPYLQQIQ). Disordered stretches follow at residues 474–493 (ITDSPPSSLMPEPEHSTEDT) and 524–604 (STVH…TSLH). Composition is skewed to polar residues over residues 524-537 (STVHSEAVSHQSHT) and 554-569 (TESIFLTQVNELPSST). The span at 570–583 (AHRENLEAVNDQRR) shows a compositional bias: basic and acidic residues. Positions 714–738 (NQKQYREAKRLLKEFRARYRQLVRS) form a coiled coil.

It localises to the cytoplasm. It is found in the nucleus. Functionally, may be involved in the response of cells to X-ray radiation. The protein is X-ray radiation resistance-associated protein 1 of Mus musculus (Mouse).